The chain runs to 72 residues: Mitotic-spindle organizing protein 1 (72 aa).

This sequence belongs to the MOZART1 family. Part of the gamma-tubulin complex.

Its subcellular location is the cytoplasm. The protein resides in the cytoskeleton. The protein localises to the microtubule organizing center. It is found in the spindle pole body. Functionally, required for gamma-tubulin complex recruitment to the microtubule organizing center (MTOC). This Coccidioides immitis (strain RS) (Valley fever fungus) protein is Mitotic-spindle organizing protein 1.